The primary structure comprises 319 residues: L-lactate dehydrogenase 2 (319 aa).

NAD(+)-binding positions include Val16, Asp37, Lys42, Tyr68, and 82–83 (GA). 2 residues coordinate substrate: Gln85 and Arg91. Residues Ser104, 121 to 123 (AAN), and Ser146 contribute to the NAD(+) site. 123 to 126 (NPVD) contributes to the substrate binding site. 151 to 154 (DSAR) lines the substrate pocket. The Proton acceptor role is filled by His178. Phosphotyrosine is present on Tyr222. Thr231 provides a ligand contact to substrate.

Belongs to the LDH/MDH superfamily. LDH family. In terms of assembly, homotetramer.

Its subcellular location is the cytoplasm. The enzyme catalyses (S)-lactate + NAD(+) = pyruvate + NADH + H(+). It functions in the pathway fermentation; pyruvate fermentation to lactate; (S)-lactate from pyruvate: step 1/1. Catalyzes the conversion of lactate to pyruvate (Potential). Contributes to S.aureus growth during nitrosative stress in both aerobically and anaerobically cultured cells, despite playing a secondary role in this resistance mechanism. This is L-lactate dehydrogenase 2 from Staphylococcus aureus (strain Mu3 / ATCC 700698).